The sequence spans 324 residues: Probable WRKY transcription factor 53 (324 aa).

The disordered stretch occupies residues 93-126; the sequence is NPGSVPESPASINGSPRSEEFADGGGSSESHHRQ. The segment at residues 152 to 220 is a DNA-binding region (WRKY); the sequence is GLEGPQDDVF…YRGTHTCSQA (69 aa).

The protein belongs to the WRKY group III family. Interacts with ESR/ESP and UPL5. Binds to WRKY30. Ubiquitinated by UPL5. Ubiquitination leads to its subsequent degradation, thus controlling the timing of leaf senescence.

It localises to the nucleus. In terms of biological role, transcription factor. Interacts specifically with the W box (5'-(T)TGAC[CT]-3'), a frequently occurring elicitor-responsive cis-acting element. May regulate the early events of leaf senescence. Negatively regulates the expression of ESR/ESP. Together with WRKY46 and WRKY70, promotes resistance to P.syringae, probably by enhancing salicylic acid (SA)- dependent genes. Contributes to the suppression of jasmonic acid (MeJA)-induced expression of PDF1.2. The polypeptide is Probable WRKY transcription factor 53 (Arabidopsis thaliana (Mouse-ear cress)).